Reading from the N-terminus, the 197-residue chain is Phosphoheptose isomerase (197 aa).

Residues 34 to 196 form the SIS domain; that stretch reads MVHCLLGGNK…DRTLFPQDEQ (163 aa). Residue 49 to 51 coordinates substrate; the sequence is NGG. Zn(2+) is bound by residues His-58 and Glu-62. Substrate-binding positions include Glu-62, 91 to 92, 117 to 119, Ser-122, and Gln-172; these read ND and STS. 2 residues coordinate Zn(2+): Gln-172 and His-180.

It belongs to the SIS family. GmhA subfamily. In terms of assembly, homotetramer. Zn(2+) is required as a cofactor.

Its subcellular location is the cytoplasm. It carries out the reaction 2 D-sedoheptulose 7-phosphate = D-glycero-alpha-D-manno-heptose 7-phosphate + D-glycero-beta-D-manno-heptose 7-phosphate. It participates in carbohydrate biosynthesis; D-glycero-D-manno-heptose 7-phosphate biosynthesis; D-glycero-alpha-D-manno-heptose 7-phosphate and D-glycero-beta-D-manno-heptose 7-phosphate from sedoheptulose 7-phosphate: step 1/1. Catalyzes the isomerization of sedoheptulose 7-phosphate in D-glycero-D-manno-heptose 7-phosphate. This chain is Phosphoheptose isomerase, found in Shewanella sp. (strain W3-18-1).